The primary structure comprises 292 residues: Cyclin-dependent-like kinase 5 (292 aa).

One can recognise a Protein kinase domain in the interval 4–286 (YDKMEKIGEG…ADAALRHAYF (283 aa)). ATP-binding positions include 10-18 (IGEGTYGTV) and Lys-33. The active-site Proton acceptor is Asp-126. Mg(2+)-binding residues include Asn-131 and Asp-144.

Belongs to the protein kinase superfamily. CMGC Ser/Thr protein kinase family. CDC2/CDKX subfamily. As to quaternary structure, heterodimer composed of a catalytic subunit cdk-5 and a regulatory subunit cdka-1. Interaction with cdka-1 is required for cdk-5 activation. Mg(2+) is required as a cofactor.

It is found in the cytoplasm. It localises to the cell projection. The protein resides in the dendrite. It carries out the reaction L-seryl-[protein] + ATP = O-phospho-L-seryl-[protein] + ADP + H(+). It catalyses the reaction L-threonyl-[protein] + ATP = O-phospho-L-threonyl-[protein] + ADP + H(+). In terms of biological role, proline-directed serine/threonine-protein kinase which, in several motor neurons, promotes the polarized trafficking of synaptic vesicles and dense-core vesicles (DCV). In the ventral nerve cord, phosphorylates lin-10 and thereby prevents lin-10-mediated anterograde trafficking of the glutamate receptor glr-1. Involved in the inhibition of glr-1 trafficking in hypoxic conditions. In DA motor neurons but not in DB motor neurons, regulates axonal transport of synaptic vesicle precursors by inhibiting dynein-mediated retrograde transport. Regulates the trafficking of dense-core vesicles in DA and DB motor neurons by promoting anterograde trafficking to the axon and preventing dynein-dependent trafficking to the dendrite. May regulate these processes in association with cdka-1/p35. Activity may be regulated by cyy-1. Involved in synapse formation during DD motor neuron remodeling by regulating transport of disassembled synaptic material to the new synaptic sites probably by activating the motor protein unc-104/kinesin-3. Regulates microtubule polarity in the dendrite of DB motor neurons. May also play a role in GABAergic synaptic vesicle localization in the ventral nerve cord. The protein is Cyclin-dependent-like kinase 5 of Caenorhabditis elegans.